The primary structure comprises 205 residues: MIGRLRGIILEKQPPLVLLETNGVGYEVQLPMTCFYELPDIGQEAIIFTQFVVREDAQLLYGFNDKQERALFRELIKVNGVGPKLALAILSGMSAQQFVAAVEREDITTLVKLPGVGKKTAERLVVEMKDRFKGLNGDLFNNTGDIQLPASNSSQISDADIEAEAASALVALGYKPQEASRLVSKIAKPGADCETLIRDALRAAL.

Residues 1-64 are domain I; that stretch reads MIGRLRGIIL…EDAQLLYGFN (64 aa). A domain II region spans residues 65–143; sequence DKQERALFRE…GLNGDLFNNT (79 aa). A flexible linker region spans residues 144–156; that stretch reads GDIQLPASNSSQI. The interval 157–205 is domain III; that stretch reads SDADIEAEAASALVALGYKPQEASRLVSKIAKPGADCETLIRDALRAAL.

The protein belongs to the RuvA family. As to quaternary structure, homotetramer. Forms an RuvA(8)-RuvB(12)-Holliday junction (HJ) complex. HJ DNA is sandwiched between 2 RuvA tetramers; dsDNA enters through RuvA and exits via RuvB. An RuvB hexamer assembles on each DNA strand where it exits the tetramer. Each RuvB hexamer is contacted by two RuvA subunits (via domain III) on 2 adjacent RuvB subunits; this complex drives branch migration. In the full resolvosome a probable DNA-RuvA(4)-RuvB(12)-RuvC(2) complex forms which resolves the HJ.

The protein resides in the cytoplasm. In terms of biological role, the RuvA-RuvB-RuvC complex processes Holliday junction (HJ) DNA during genetic recombination and DNA repair, while the RuvA-RuvB complex plays an important role in the rescue of blocked DNA replication forks via replication fork reversal (RFR). RuvA specifically binds to HJ cruciform DNA, conferring on it an open structure. The RuvB hexamer acts as an ATP-dependent pump, pulling dsDNA into and through the RuvAB complex. HJ branch migration allows RuvC to scan DNA until it finds its consensus sequence, where it cleaves and resolves the cruciform DNA. This is Holliday junction branch migration complex subunit RuvA from Yersinia enterocolitica serotype O:8 / biotype 1B (strain NCTC 13174 / 8081).